We begin with the raw amino-acid sequence, 397 residues long: Yellow-related salivary protein LJM111 (397 aa).

A signal peptide spans 1–18 (MKLFFFLYTFGLVQTIFG).

It belongs to the major royal jelly protein family. Salivary gland (at protein level).

It is found in the secreted. Probably modulates blood feeding of sand flies on vertebrate species by binding and sequestering different mediators involved in the host response. Binds biogenic amines. Binds adrenaline and noradrenaline with high affinity. Binds serotonin. Binds dopamine and octopamine. Exhibits anti-inflammatory effects in the host: reduces IL17A, TNF-alpha (TNF) and IFN-gamma (IFNG) production by host lymph node cells, suppresses expression of MHC-II and CD86, reduces TNF-alpha production and increases IL10 production, in host bone marrow-derived dendritic cells (BMDCs) stimulated by lipopolysaccharides. Reduces pain in mouse mechanical hypernociception model. This is Yellow-related salivary protein LJM111 from Lutzomyia longipalpis (Sand fly).